The sequence spans 975 residues: C-1-tetrahydrofolate synthase, mitochondrial (975 aa).

The N-terminal 34 residues, 1–34, are a transit peptide targeting the mitochondrion; it reads MLSRLSLLSNSRAFQQARWRIYRLKVSPTVHASQ. The methylenetetrahydrofolate dehydrogenase and cyclohydrolase stretch occupies residues 35 to 343; sequence YHILSGRKLA…KPLPLHLESP (309 aa). Substrate-binding positions include 83–87 and 130–132; these read YVRMK and IQL. Residues 201 to 203 and serine 226 each bind NADP(+); that span reads GRS. 301 to 305 is a substrate binding site; it reads PGGVG. The segment at 344–975 is formyltetrahydrofolate synthetase; that stretch reads VPSDIDISRA…DDDGEIEGLF (632 aa). ATP is bound at residue 408-415; it reads TPLGEGKS.

In the N-terminal section; belongs to the tetrahydrofolate dehydrogenase/cyclohydrolase family. This sequence in the C-terminal section; belongs to the formate--tetrahydrofolate ligase family. In terms of assembly, homodimer.

It localises to the mitochondrion. It carries out the reaction (6R)-5,10-methylene-5,6,7,8-tetrahydrofolate + NADP(+) = (6R)-5,10-methenyltetrahydrofolate + NADPH. The catalysed reaction is (6R)-5,10-methenyltetrahydrofolate + H2O = (6R)-10-formyltetrahydrofolate + H(+). It catalyses the reaction (6S)-5,6,7,8-tetrahydrofolate + formate + ATP = (6R)-10-formyltetrahydrofolate + ADP + phosphate. The protein operates within one-carbon metabolism; tetrahydrofolate interconversion. Its function is as follows. Mitochondrial isozyme of C-1-tetrahydrofolate synthase. The trifunctional enzyme catalyzes the interconversion of the one-carbon derivatives of tetrahydrofolate (THF) between different oxidation states by the enzymatic activities 10-formyltetrahydrofolate synthetase, 5,lO-methenyltetrahydrofolate cyclohydrolase, and 5,lO-methylenetetrahydrofolate dehydrogenase. The protein is C-1-tetrahydrofolate synthase, mitochondrial of Saccharomyces cerevisiae (strain ATCC 204508 / S288c) (Baker's yeast).